Consider the following 298-residue polypeptide: Bifunctional protein FolD (298 aa).

NADP(+) is bound by residues 165-167 (GRS), serine 190, and isoleucine 231.

Belongs to the tetrahydrofolate dehydrogenase/cyclohydrolase family. As to quaternary structure, homodimer.

The catalysed reaction is (6R)-5,10-methylene-5,6,7,8-tetrahydrofolate + NADP(+) = (6R)-5,10-methenyltetrahydrofolate + NADPH. The enzyme catalyses (6R)-5,10-methenyltetrahydrofolate + H2O = (6R)-10-formyltetrahydrofolate + H(+). It participates in one-carbon metabolism; tetrahydrofolate interconversion. Functionally, catalyzes the oxidation of 5,10-methylenetetrahydrofolate to 5,10-methenyltetrahydrofolate and then the hydrolysis of 5,10-methenyltetrahydrofolate to 10-formyltetrahydrofolate. This Prochlorococcus marinus subsp. pastoris (strain CCMP1986 / NIES-2087 / MED4) protein is Bifunctional protein FolD.